Reading from the N-terminus, the 438-residue chain is Thymidine phosphorylase (438 aa).

This sequence belongs to the thymidine/pyrimidine-nucleoside phosphorylase family. As to quaternary structure, homodimer.

It carries out the reaction thymidine + phosphate = 2-deoxy-alpha-D-ribose 1-phosphate + thymine. Its pathway is pyrimidine metabolism; dTMP biosynthesis via salvage pathway; dTMP from thymine: step 1/2. Functionally, the enzymes which catalyze the reversible phosphorolysis of pyrimidine nucleosides are involved in the degradation of these compounds and in their utilization as carbon and energy sources, or in the rescue of pyrimidine bases for nucleotide synthesis. In Burkholderia orbicola (strain MC0-3), this protein is Thymidine phosphorylase.